Reading from the N-terminus, the 316-residue chain is BRCA2 and CDKN1A-interacting protein (316 aa).

Residues methionine 1–glutamate 57 are disordered. A compositionally biased stretch (acidic residues) spans glutamate 25–glutamate 57. Serine 44 and serine 114 each carry phosphoserine. The interaction with BRCA2 stretch occupies residues isoleucine 61–lysine 169. The interaction with CDKN1A stretch occupies residues methionine 163–lysine 261. A Phosphoserine modification is found at serine 283.

The protein belongs to the BCP1 family. In terms of assembly, interacts with BRCA2, CDKN1A and MTDH/LYRIC. Interacts with DCTN1/p150-glued and ACTR1A/ARP1. Interacts with alpha-, beta- and gamma-tubulins. Interacts with TENT5C; the interaction has no effect on TENT5C poly(A) polymerase function. Expressed in the testes (at protein level).

Its subcellular location is the nucleus. It is found in the cytoplasm. It localises to the cytoskeleton. The protein localises to the microtubule organizing center. The protein resides in the centrosome. Its subcellular location is the centriole. It is found in the spindle pole. Functionally, during interphase, required for microtubule organizing and anchoring activities. During mitosis, required for the organization and stabilization of the spindle pole. May promote cell cycle arrest by enhancing the inhibition of CDK2 activity by CDKN1A. May be required for repair of DNA damage by homologous recombination in conjunction with BRCA2. May not be involved in non-homologous end joining (NHEJ). This chain is BRCA2 and CDKN1A-interacting protein (Bccip), found in Mus musculus (Mouse).